We begin with the raw amino-acid sequence, 100 residues long: MFAIIKTGGKQVKVEPGQEIFIEKIKGEVNDKIAFDEILMIDGQIGTPTIEGAKVLGTIVKQGKAKKIRVIRYHPKKNVNKIYGHRQPYTKVKIEEISAK.

Belongs to the bacterial ribosomal protein bL21 family. Part of the 50S ribosomal subunit. Contacts protein L20.

This protein binds to 23S rRNA in the presence of protein L20. The protein is Large ribosomal subunit protein bL21 of Mycoplasma capricolum subsp. capricolum (strain California kid / ATCC 27343 / NCTC 10154).